The primary structure comprises 510 residues: NAD(P)H-quinone oxidoreductase subunit 2 A, chloroplastic (510 aa).

The next 13 membrane-spanning stretches (helical) occupy residues 24–44, 57–77, 99–119, 124–144, 149–169, 183–203, 227–247, 295–315, 323–343, 354–374, 395–415, 418–438, and 484–504; these read LLLFDGSLIFPECILIFGLIL, IPWLYFISSTSLVMSITALLF, IFQFLILLCSTLCIPLSVEYI, MAITEFLLFVLTATLGGMFLC, LITIFVAPECFSLCSYLLSGY, YLLMGGASSSILVHGFSWLYG, PGISIALIFITVGIGFKLSPA, WHLLLEILAILSMILGNLIAI, MLAYSSIGQIGYVIIGIIVGD, YMLFYISMNLGTFACIVLFGL, ALSLALCLLSLGGLPPLAGFF, LYLFWCGWQAGLYFLVLIGLL, and MIVCVIASTIPGISMNPIIAI.

The protein belongs to the complex I subunit 2 family. NDH is composed of at least 16 different subunits, 5 of which are encoded in the nucleus.

Its subcellular location is the plastid. It is found in the chloroplast thylakoid membrane. The enzyme catalyses a plastoquinone + NADH + (n+1) H(+)(in) = a plastoquinol + NAD(+) + n H(+)(out). It catalyses the reaction a plastoquinone + NADPH + (n+1) H(+)(in) = a plastoquinol + NADP(+) + n H(+)(out). In terms of biological role, NDH shuttles electrons from NAD(P)H:plastoquinone, via FMN and iron-sulfur (Fe-S) centers, to quinones in the photosynthetic chain and possibly in a chloroplast respiratory chain. The immediate electron acceptor for the enzyme in this species is believed to be plastoquinone. Couples the redox reaction to proton translocation, and thus conserves the redox energy in a proton gradient. This chain is NAD(P)H-quinone oxidoreductase subunit 2 A, chloroplastic, found in Panax ginseng (Korean ginseng).